Consider the following 383-residue polypeptide: Pheromone-regulated membrane protein 10 (383 aa).

Over 1–65 the chain is Cytoplasmic; sequence MIVSFGDATT…ILADTNLYPP (65 aa). Residues 66–86 traverse the membrane as a helical segment; sequence WMCVLLYAFCSAMVTPYAFGG. Position 87 (aspartate 87) is a topological domain, extracellular. The helical transmembrane segment at 88–108 threads the bilayer; that stretch reads WVNLAISFFMGLCVGSLQFIL. Over 109–117 the chain is Cytoplasmic; it reads SQKSYMYSN. Residues 118-138 form a helical membrane-spanning segment; sequence VFEISASIVVSFCGRAFGSIP. Residues 139–141 lie on the Extracellular side of the membrane; it reads RSH. The helical transmembrane segment at 142-162 threads the bilayer; that stretch reads ICFGAVTQGSLALILPGYIIL. At 163-180 the chain is on the cytoplasmic side; it reads CGALELQSRSLVAGAVRM. Residues 181-201 form a helical membrane-spanning segment; the sequence is FYAIIYSLFLGFGITLGSALF. Residues 202–216 are Extracellular-facing; it reads GWMYHNATNEISCPQ. A helical membrane pass occupies residues 217 to 237; it reads LISPWFRFLFVPAFTISISLL. Topologically, residues 238-241 are cytoplasmic; it reads NQAH. Residues 242–262 traverse the membrane as a helical segment; sequence ISQLPVMVFISCTGYVVTYWA. Over 263–271 the chain is Extracellular; that stretch reads GKHFANSTE. The chain crosses the membrane as a helical span at residues 272-292; that stretch reads FTAALAAFVIGVLGNLYSRIW. A topological domain (cytoplasmic) is located at residue lysine 293. Residues 294–314 form a helical membrane-spanning segment; it reads GLAVSAMLPAIFVQVPSGIAS. The Extracellular segment spans residues 315–352; the sequence is QNSLLSGLQSANTIVNANETITTSTSDPSSSMSFGMTM. The chain crosses the membrane as a helical span at residues 353-373; that stretch reads IQVCVGISVGLFASSLFVYPF. The Cytoplasmic portion of the chain corresponds to 374-383; the sequence is GKKKTGLFSL.

The protein belongs to the ThrE exporter (TC 2.A.79) family.

It localises to the membrane. The sequence is that of Pheromone-regulated membrane protein 10 (PRM10) from Saccharomyces cerevisiae (strain ATCC 204508 / S288c) (Baker's yeast).